Reading from the N-terminus, the 277-residue chain is NH(3)-dependent NAD(+) synthetase (277 aa).

36–43 (GLSGGIDS) lines the ATP pocket. A Mg(2+)-binding site is contributed by Asp42. Arg118 contacts deamido-NAD(+). Thr138 serves as a coordination point for ATP. Mg(2+) is bound at residue Glu143. ATP contacts are provided by Lys167 and Ser189.

Belongs to the NAD synthetase family. In terms of assembly, homodimer.

It catalyses the reaction deamido-NAD(+) + NH4(+) + ATP = AMP + diphosphate + NAD(+) + H(+). It functions in the pathway cofactor biosynthesis; NAD(+) biosynthesis; NAD(+) from deamido-NAD(+) (ammonia route): step 1/1. Catalyzes the ATP-dependent amidation of deamido-NAD to form NAD. Uses ammonia as a nitrogen source. This is NH(3)-dependent NAD(+) synthetase from Chlorobaculum tepidum (strain ATCC 49652 / DSM 12025 / NBRC 103806 / TLS) (Chlorobium tepidum).